Consider the following 291-residue polypeptide: Probable ABC transporter permease protein PH1038 (291 aa).

8 helical membrane-spanning segments follow: residues 7–27 (PFFFLLPALTLMVPFVIYPVF), 75–95 (IVWIAIHLPTTIFLGLGFALL), 106–126 (IIKSIIFLGMVIPMVVGGLII), 133–153 (GAGVIPAFFKLIGIEKLAITW), 160–180 (ALFSVILGSIWIWTGFSMLMY), 208–228 (FVIWPLLRPITVVIVAMTLLW), 232–252 (IFDIVYVATGGGPGGASMVLA), and 267–287 (YAAVVAVLLTALTFIPALWLI). One can recognise an ABC transmembrane type-1 domain in the interval 71-286 (LIHNIVWIAI…ALTFIPALWL (216 aa)).

The protein belongs to the binding-protein-dependent transport system permease family. MalFG subfamily.

The protein localises to the cell membrane. In terms of biological role, probably part of a binding-protein-dependent transport system PH1036/38/39. Probably responsible for the translocation of the substrate across the membrane. This Pyrococcus horikoshii (strain ATCC 700860 / DSM 12428 / JCM 9974 / NBRC 100139 / OT-3) protein is Probable ABC transporter permease protein PH1038.